The primary structure comprises 121 residues: Ribonuclease P protein component (121 aa).

Belongs to the RnpA family. In terms of assembly, consists of a catalytic RNA component (M1 or rnpB) and a protein subunit.

It carries out the reaction Endonucleolytic cleavage of RNA, removing 5'-extranucleotides from tRNA precursor.. Its function is as follows. RNaseP catalyzes the removal of the 5'-leader sequence from pre-tRNA to produce the mature 5'-terminus. It can also cleave other RNA substrates such as 4.5S RNA. The protein component plays an auxiliary but essential role in vivo by binding to the 5'-leader sequence and broadening the substrate specificity of the ribozyme. This is Ribonuclease P protein component from Erythrobacter litoralis (strain HTCC2594).